Consider the following 1054-residue polypeptide: Cell wall acid trehalase ARB_03719 (1054 aa).

The signal sequence occupies residues 1–24 (MKQPNINLAACILWLLSIITAVAA). 7 N-linked (GlcNAc...) asparagine glycosylation sites follow: N138, N178, N183, N207, N239, N277, and N309. 450 to 451 (WD) contacts substrate. Residues N495, N515, N572, and N580 are each glycosylated (N-linked (GlcNAc...) asparagine). E586 acts as the Proton donor in catalysis. Residues N620 and N648 are each glycosylated (N-linked (GlcNAc...) asparagine). 654–655 (KQ) serves as a coordination point for substrate. N-linked (GlcNAc...) asparagine glycans are attached at residues N808 and N844. The segment at 950-974 (PLHPVTDPENGDASGSSPTTPASSV) is disordered. Low complexity predominate over residues 962 to 974 (ASGSSPTTPASSV). N1004, N1007, and N1039 each carry an N-linked (GlcNAc...) asparagine glycan.

The protein belongs to the glycosyl hydrolase 65 family.

The protein localises to the secreted. The protein resides in the cell wall. It catalyses the reaction alpha,alpha-trehalose + H2O = alpha-D-glucose + beta-D-glucose. In terms of biological role, cell wall acid trehalase that catalyzes hydrolysis of the disaccharide trehalose and required for growth on trehalose as carbon source. Plays a role in virulence. This is Cell wall acid trehalase ARB_03719 from Arthroderma benhamiae (strain ATCC MYA-4681 / CBS 112371) (Trichophyton mentagrophytes).